The chain runs to 128 residues: Sulfurtransferase TusD (128 aa).

The active-site Cysteine persulfide intermediate is the Cys-78.

This sequence belongs to the DsrE/TusD family. As to quaternary structure, heterohexamer, formed by a dimer of trimers. The hexameric TusBCD complex contains 2 copies each of TusB, TusC and TusD. The TusBCD complex interacts with TusE.

Its subcellular location is the cytoplasm. Part of a sulfur-relay system required for 2-thiolation of 5-methylaminomethyl-2-thiouridine (mnm(5)s(2)U) at tRNA wobble positions. Accepts sulfur from TusA and transfers it in turn to TusE. In Klebsiella pneumoniae (strain 342), this protein is Sulfurtransferase TusD.